The chain runs to 888 residues: Alanine--tRNA ligase (888 aa).

Zn(2+)-binding residues include His573, His577, Cys676, and His680.

The protein belongs to the class-II aminoacyl-tRNA synthetase family. Zn(2+) serves as cofactor.

It localises to the cytoplasm. It catalyses the reaction tRNA(Ala) + L-alanine + ATP = L-alanyl-tRNA(Ala) + AMP + diphosphate. In terms of biological role, catalyzes the attachment of alanine to tRNA(Ala) in a two-step reaction: alanine is first activated by ATP to form Ala-AMP and then transferred to the acceptor end of tRNA(Ala). Also edits incorrectly charged Ser-tRNA(Ala) and Gly-tRNA(Ala) via its editing domain. The sequence is that of Alanine--tRNA ligase from Corynebacterium diphtheriae (strain ATCC 700971 / NCTC 13129 / Biotype gravis).